We begin with the raw amino-acid sequence, 485 residues long: Heat stress transcription factor A-1d (485 aa).

Disordered stretches follow at residues 1–34 (MDVS…SSNA) and 126–149 (RRKP…QNSS). Residues 35–129 (PPPFLSKTYD…LLQSITRRKP (95 aa)) mediate DNA binding. Residues 136–146 (GHQRSQHSNGQ) are compositionally biased toward low complexity. A hydrophobic repeat HR-A/B region spans residues 152-218 (ACVEVGKFGL…QLMSFLAKAV (67 aa)). Disordered regions lie at residues 229-269 (QQQN…GQIV) and 436-461 (PVPD…DKTK). The Bipartite nuclear localization signal signature appears at 238–252 (NRRISDTSKKRRFKR). Polar residues predominate over residues 441–455 (MDSTPVDNETEQEQN). Residues 472–480 (LLSPETLDL) carry the Nuclear export signal motif.

It belongs to the HSF family. Class A subfamily. Homotrimer. Interacts with HSP90-2. In terms of processing, exhibits temperature-dependent phosphorylation.

It localises to the cytoplasm. It is found in the nucleus. Functionally, transcriptional regulator that specifically binds DNA sequence 5'-AGAAnnTTCT-3' known as heat shock promoter elements (HSE). The sequence is that of Heat stress transcription factor A-1d (HSFA1D) from Arabidopsis thaliana (Mouse-ear cress).